We begin with the raw amino-acid sequence, 36 residues long: Potassium channel toxin alpha-KTx 23.1 (36 aa).

4 disulfide bridges follow: cysteine 6–cysteine 26, cysteine 12–cysteine 31, cysteine 16–cysteine 33, and cysteine 21–cysteine 36. Cysteine 36 bears the Cysteine amide mark.

It belongs to the short scorpion toxin superfamily. Potassium channel inhibitor family. Alpha-KTx 23 subfamily. As to expression, expressed by the venom gland.

Its subcellular location is the secreted. Voltage-gated potassium channel inhibitor. Selectively and irreversibly binds (K(d)=2.9 pM) and blocks hKv1.3/KCNA3 potassium channels of human T-lymphocytes. Weakly blocks hKCa3.1/KCNN4, mKv1.1/KCNA1, and hKv1.2/KCNA2 channels. In vivo, high doses (200 ug) produce no symptoms of intoxication when injected into mice. The polypeptide is Potassium channel toxin alpha-KTx 23.1 (Vaejovis mexicanus smithi (Mexican scorpion)).